Here is a 133-residue protein sequence, read N- to C-terminus: Large ribosomal subunit protein uL14m (133 aa).

The protein belongs to the universal ribosomal protein uL14 family. As to quaternary structure, probably part of the large ribosomal subunit.

The protein resides in the hydrogenosome. In Nyctotherus ovalis, this protein is Large ribosomal subunit protein uL14m (rpl14).